The sequence spans 878 residues: Phosphoenolpyruvate carboxylase (878 aa).

Catalysis depends on residues His137 and Lys545.

The protein belongs to the PEPCase type 1 family. It depends on Mg(2+) as a cofactor.

It catalyses the reaction oxaloacetate + phosphate = phosphoenolpyruvate + hydrogencarbonate. Its function is as follows. Forms oxaloacetate, a four-carbon dicarboxylic acid source for the tricarboxylic acid cycle. The chain is Phosphoenolpyruvate carboxylase from Yersinia pestis bv. Antiqua (strain Antiqua).